Here is a 138-residue protein sequence, read N- to C-terminus: Acidic phospholipase A2 2 (138 aa).

The first 16 residues, 1-16 (MRTLWIVAVWLTGVEG), serve as a signal peptide directing secretion. 7 disulfide bridges follow: cysteine 42/cysteine 131, cysteine 44/cysteine 60, cysteine 59/cysteine 111, cysteine 65/cysteine 138, cysteine 66/cysteine 104, cysteine 73/cysteine 97, and cysteine 91/cysteine 102. Ca(2+) contacts are provided by tyrosine 43, glycine 45, and glycine 47. Histidine 63 is a catalytic residue. Ca(2+) is bound at residue aspartate 64. Aspartate 105 is a catalytic residue.

Monomer. Ca(2+) is required as a cofactor. In terms of tissue distribution, expressed by the venom gland.

It is found in the secreted. The enzyme catalyses a 1,2-diacyl-sn-glycero-3-phosphocholine + H2O = a 1-acyl-sn-glycero-3-phosphocholine + a fatty acid + H(+). In terms of biological role, snake venom phospholipase that inhibits ADP- and collagen-induced human platelet aggregation. This inhibition is completely inhibited by abolition of catalytic activity in case of collagen as inducer and partially inhibited in case of ADP as inducer. PLA2 catalyzes the calcium-dependent hydrolysis of the 2-acyl groups in 3-sn-phosphoglycerides. This is Acidic phospholipase A2 2 from Macrovipera lebetinus (Levantine viper).